We begin with the raw amino-acid sequence, 398 residues long: Organelle RRM domain-containing protein 1, chloroplastic (398 aa).

Residues 1-88 constitute a chloroplast transit peptide; sequence MDTALPSVLI…RWVVVMDTPP (88 aa). Positions 54–70 are enriched in low complexity; that stretch reads LLASSSESPPAQLAAAS. The tract at residues 54–79 is disordered; sequence LLASSSESPPAQLAAASTESQSRSSR. An RRM domain is found at 299–377; it reads KRLFVTGLSF…WMIVVDVAKT (79 aa).

It is found in the plastid. The protein localises to the chloroplast. Functionally, involved in C-to-U editing of chloroplastic RNA. Functions as major chloroplastic editing factor. Controls a majority of the chloroplastic editing sites. The sequence is that of Organelle RRM domain-containing protein 1, chloroplastic (ORRM1) from Zea mays (Maize).